The chain runs to 744 residues: Tripartite motif-containing protein 3 (744 aa).

Alanine 2 is subject to N-acetylalanine. The tract at residues 2 to 290 (AKREDSPGPE…LAAQAFPERP (289 aa)) is interaction with KIF21B. Serine 7 is subject to Phosphoserine. An RING-type zinc finger spans residues 22–63 (CSICLDRYRCPKVLPCLHTFCERCLQNYIPPQSLTLSCPVCR). The segment at 110–151 (GRPLSCPNHEGKTMEFYCEACETAMCGECRAGEHREHGTVLL) adopts a B box-type zinc-finger fold. Positions 115, 118, 138, and 143 each coordinate Zn(2+). Positions 153–224 (DVVEQHKAAL…RKQALVSDLE (72 aa)) form a coiled coil. One copy of the Filamin repeat lies at 317–418 (TTSATAHETV…VRGSPFRVRA (102 aa)). The interval 419 to 464 (LRPGDLPPSPDDVKRRVKSPGGPGSHVRQKAVRRPSSMYSTGGKRK) is disordered. Residue serine 427 is modified to Phosphoserine. 6 NHL repeats span residues 473-516 (VFRV…FSNE), 520-563 (KFRF…FSPE), 564-605 (GKFK…FQPN), 609-652 (VGRF…YSAD), 656-699 (LFKF…FDSS), and 700-743 (GSFL…YRYL).

Belongs to the TRIM/RBCC family. Forms homooligomers. Interacts with TRIM2; this interaction reduces TRIM2 activity. Associates with myosin-Vb (MYO5B) and alpha-actinin-4 (ACTN4). Component of the CART complex, at least composed of ACTN4, HGS/HRS, MYO5B and TRIM3. Interacts with ZFYVE28/LST2. Interacts with KIF21B.

It localises to the cytoplasm. The protein localises to the early endosome. Its subcellular location is the golgi apparatus. It is found in the trans-Golgi network. The protein resides in the cell projection. It localises to the dendrite. The catalysed reaction is S-ubiquitinyl-[E2 ubiquitin-conjugating enzyme]-L-cysteine + [acceptor protein]-L-lysine = [E2 ubiquitin-conjugating enzyme]-L-cysteine + N(6)-ubiquitinyl-[acceptor protein]-L-lysine.. Its function is as follows. E3 ubiquitin ligase that plays essential roles in neuronal functions such as regulation of neuronal plasticity, learning, and memory. In addition to its neuronal functions, participates in other biological processes such as innate immunity or cell cycle regulation. Component of the cytoskeleton-associated recycling or transport complex in neurons, polyubiquitinates gamma-actin, thus regulating neuronal plasticity, learning, and memory. Ubiquitinates postsynaptic scaffold GKAP, a neuronal substrate involved in synaptic remodeling and thereby modulates dendritic spine morphology. Positively regulates motility of microtubule-dependent motor protein KIF21B. Induces growth arrest via its RING-dependent E3 ligase activity and ubiquinates CDKN1A. Positively regulates TLR3-mediated signaling by mediating 'Lys-63'-linked polyubiquitination of TLR3. In turn, promotes the recognition and sorting of polyubiquitinated TLR3 by the ESCRT complexes. The protein is Tripartite motif-containing protein 3 (Trim3) of Mus musculus (Mouse).